The following is a 241-amino-acid chain: MAAQGRGRVGGGKEERVSARSDSELLLHPELLSEEFLLLTLEQKNILVKNDVKMDKDGLTDLYIQHAIPLPQRDLPKSRWGKMMEKKRKQNEPKSENKSVTAVGGLRKRPLIVFDGSSTSTSIKVKKTENGATDRLKPPPAGSITNTVRRLSAPSNASTYISASSLSEDAKLEVRNNEAKQNNISKTNSSVLVNLKTHPLSPVAGTTVVKLKRSVPKDESDLPNDLKPTEAKKKIQHCTWP.

3 disordered regions span residues 1–21, 82–102, and 212–241; these read MAAQ…SARS, KMME…SVTA, and KRSV…CTWP. The segment covering 11 to 21 has biased composition (basic and acidic residues); it reads GGKEERVSARS.

It belongs to the ashwin family.

The protein resides in the nucleus. The sequence is that of Ashwin from Gallus gallus (Chicken).